Consider the following 145-residue polypeptide: MVYIVVLIVILLDQMVKLLVMEKMKVSESIPIIKDVFHLTYVQNRGAAFGILPGRRYLFIVITVVVISFLLIYYYKTRGSGMVTLSTGLIIGGALGNLIDRIRFGYVVDYLDFRIWPVFNLADSSVVIGAALLILYLWQQEKVGD.

The next 3 membrane-spanning stretches (helical) occupy residues 1-21, 57-77, and 79-99; these read MVYI…LLVM, YLFI…YYKT, and GSGM…GNLI. Active-site residues include aspartate 109 and aspartate 123. The helical transmembrane segment at 115-135 threads the bilayer; sequence IWPVFNLADSSVVIGAALLIL.

This sequence belongs to the peptidase A8 family.

The protein localises to the cell inner membrane. It catalyses the reaction Release of signal peptides from bacterial membrane prolipoproteins. Hydrolyzes -Xaa-Yaa-Zaa-|-(S,diacylglyceryl)Cys-, in which Xaa is hydrophobic (preferably Leu), and Yaa (Ala or Ser) and Zaa (Gly or Ala) have small, neutral side chains.. Its pathway is protein modification; lipoprotein biosynthesis (signal peptide cleavage). In terms of biological role, this protein specifically catalyzes the removal of signal peptides from prolipoproteins. This chain is Lipoprotein signal peptidase, found in Halothermothrix orenii (strain H 168 / OCM 544 / DSM 9562).